We begin with the raw amino-acid sequence, 255 residues long: UPF0246 protein Caul_4480 (255 aa).

It belongs to the UPF0246 family.

The sequence is that of UPF0246 protein Caul_4480 from Caulobacter sp. (strain K31).